A 592-amino-acid chain; its full sequence is MPATQQMSRLVDSPDGVRIAVYHEGNPDGPTVVLVHGFPDSHVLWDGVVPLLAERFRIVRYDNRGVGRSSVPKPISAYTMAHFADDFDAVIGELSPGEPVHVLAHDWGSVGVWEYLRRPGASDRVASFTSVSGPSQDHLVNYVYGGLRRPWRPRTFLRAISQTLRLSYMALFSVPVVAPLLLRVALSSAAVRRNMVGDIPVDQIHHSETLARDAAHSVKTYPANYFRSFSSSRRGRAIPIVDVPVQLIVNSQDPYVRPYGYDQTARWVPRLWRRDIKAGHFSPMSHPQVMAAAVHDFADLADGKQPSRALLRAQVGRPRGYFGDTLVSVTGAGSGIGRETALAFAREGAEIVISDIDEATVKDTAAEIAARGGIAYPYVLDVSDAEAVEAFAERVSAEHGVPDIVVNNAGIGQAGRFLDTPAEQFDRVLAVNLGGVVNGCRAFGQRLVERGTGGHIVNVSSMAAYAPLQSLSAYCTSKAATYMFSDCLRAELDAAGVGLTTICPGVIDTNIVATTGFHAPGTDEEKIDGRRGQIDKMFALRSYGPDKVADAIVSAVKKKKPIRPVAPEAYALYGISRVLPQALRSTARLRVI.

The region spanning P30–H286 is the AB hydrolase-1 domain. Residue S461 participates in substrate binding. Y474 (proton acceptor) is an active-site residue.

Belongs to the short-chain dehydrogenases/reductases (SDR) family.

The sequence is that of Probable oxidoreductase EphD (ephD) from Mycobacterium bovis (strain ATCC BAA-935 / AF2122/97).